Here is a 299-residue protein sequence, read N- to C-terminus: Taste receptor type 2 member 4 (299 aa).

Residues Met-1–Ala-9 lie on the Extracellular side of the membrane. A helical transmembrane segment spans residues Ile-10–Val-30. At Asn-31 to Arg-46 the chain is on the cytoplasmic side. The helical transmembrane segment at Ile-47 to Ile-67 threads the bilayer. Residues Tyr-68–Ser-81 are Extracellular-facing. Residues Ala-82–Leu-102 traverse the membrane as a helical segment. At Asn-103–Arg-131 the chain is on the cytoplasmic side. Residues Leu-132 to Gln-152 traverse the membrane as a helical segment. The Extracellular segment spans residues Ala-153 to Glu-172. N-linked (GlcNAc...) asparagine glycans are attached at residues Asn-164 and Asn-165. Residues Gly-173 to Val-193 traverse the membrane as a helical segment. Topologically, residues Thr-194 to Lys-230 are cytoplasmic. The chain crosses the membrane as a helical span at residues Leu-231–Leu-251. Over Pro-252–Lys-262 the chain is Extracellular. The helical transmembrane segment at Ser-263 to Thr-283 threads the bilayer. Topologically, residues His-284–Lys-299 are cytoplasmic.

This sequence belongs to the G-protein coupled receptor T2R family.

Its subcellular location is the membrane. It is found in the cell projection. The protein localises to the cilium membrane. Gustducin-coupled receptor implicated in the perception of bitter compounds in the oral cavity and the gastrointestinal tract. Signals through PLCB2 and the calcium-regulated cation channel TRPM5. In airway epithelial cells, binding of denatonium increases the intracellular calcium ion concentration and stimulates ciliary beat frequency. This chain is Taste receptor type 2 member 4 (TAS2R4), found in Pan troglodytes (Chimpanzee).